The sequence spans 327 residues: Complex I intermediate-associated protein 30, mitochondrial (327 aa).

A mitochondrion-targeting transit peptide spans 1–24 (MALVHKLLRGTYFLRKFXKPTSAL). A disordered region spans residues 42 to 63 (PVASPGKASSQRKTEGDLQGDH). Positions 53–63 (RKTEGDLQGDH) are enriched in basic and acidic residues. A Phosphoserine modification is found at Ser318.

It belongs to the CIA30 family. Part of the mitochondrial complex I assembly/MCIA complex that comprises at least the core subunits TMEM126B, NDUFAF1, ECSIT and ACAD9 and complement subunits such as COA1 and TMEM186. Interacts with ECSIT. Interacts with ACAD9. At early stages of complex I assembly, it is found in intermediate subcomplexes that contain different subunits including NDUFB6, NDUFA6, NDUFA9, NDUFS3, NDUFS7, ND1, ND2 and ND3. Interacts with TMEM70 and TMEM242.

Its subcellular location is the mitochondrion. The protein resides in the mitochondrion matrix. Functionally, as part of the MCIA complex, involved in the assembly of the mitochondrial complex I. This is Complex I intermediate-associated protein 30, mitochondrial from Pan troglodytes (Chimpanzee).